We begin with the raw amino-acid sequence, 210 residues long: Probable peroxygenase 7 (210 aa).

Positions 1 to 24 (MSHQTVALASKAKSPKPKRGKLDK) are disordered. An EF-hand domain is found at 25–60 (EKMTALEKHVSFFDRNKDGTVYPWETYQGFRALGTG). Histidine 33 is a binding site for heme. Residues aspartate 38, asparagine 40, aspartate 42, threonine 44, and glutamate 49 each contribute to the Ca(2+) site. The Proline-knot signature appears at 81–90 (PGKGFSPLFP). Serine 188 bears the Phosphoserine mark.

It belongs to the caleosin family. As to quaternary structure, homodimer. The cofactor is heme b. It depends on Ca(2+) as a cofactor. In terms of tissue distribution, expressed in pollen coat.

It is found in the secreted. The catalysed reaction is RH + ROOH = ROH + ROH.. Functionally, probable calcium-binding peroxygenase. May be involved in pollination. In Arabidopsis thaliana (Mouse-ear cress), this protein is Probable peroxygenase 7 (PXG7).